Consider the following 267-residue polypeptide: 4-hydroxy-tetrahydrodipicolinate reductase (267 aa).

NAD(+) is bound by residues 8 to 13 (GAAGRM) and glutamate 34. Arginine 35 serves as a coordination point for NADP(+). Residues 98 to 100 (GST) and 122 to 125 (APNM) each bind NAD(+). The active-site Proton donor/acceptor is histidine 155. Position 156 (histidine 156) interacts with (S)-2,3,4,5-tetrahydrodipicolinate. Lysine 159 serves as the catalytic Proton donor. Residue 165–166 (GT) participates in (S)-2,3,4,5-tetrahydrodipicolinate binding.

This sequence belongs to the DapB family.

The protein resides in the cytoplasm. The catalysed reaction is (S)-2,3,4,5-tetrahydrodipicolinate + NAD(+) + H2O = (2S,4S)-4-hydroxy-2,3,4,5-tetrahydrodipicolinate + NADH + H(+). It catalyses the reaction (S)-2,3,4,5-tetrahydrodipicolinate + NADP(+) + H2O = (2S,4S)-4-hydroxy-2,3,4,5-tetrahydrodipicolinate + NADPH + H(+). It participates in amino-acid biosynthesis; L-lysine biosynthesis via DAP pathway; (S)-tetrahydrodipicolinate from L-aspartate: step 4/4. Its function is as follows. Catalyzes the conversion of 4-hydroxy-tetrahydrodipicolinate (HTPA) to tetrahydrodipicolinate. The protein is 4-hydroxy-tetrahydrodipicolinate reductase of Pelobacter propionicus (strain DSM 2379 / NBRC 103807 / OttBd1).